The primary structure comprises 411 residues: Peptidase T (411 aa).

Histidine 79 lines the Zn(2+) pocket. Aspartate 81 is an active-site residue. Zn(2+) is bound at residue aspartate 142. The active-site Proton acceptor is the glutamate 176. Positions 177, 199, and 381 each coordinate Zn(2+).

It belongs to the peptidase M20B family. It depends on Zn(2+) as a cofactor.

The protein resides in the cytoplasm. It carries out the reaction Release of the N-terminal residue from a tripeptide.. Functionally, cleaves the N-terminal amino acid of tripeptides. The polypeptide is Peptidase T (Exiguobacterium sibiricum (strain DSM 17290 / CCUG 55495 / CIP 109462 / JCM 13490 / 255-15)).